Consider the following 477-residue polypeptide: Salivary plasminogen activator alpha 1 (477 aa).

The first 36 residues, 1 to 36 (MVNTMKTKLLCVLLLCGAVFSLPRQETYRQLARGSR), serve as a signal peptide directing secretion. The Fibronectin type-I domain occupies 40 to 82 (VACKDEITQMTYRRQESWLRPEVRSKRVEHCQCDRGQARCHTV). 14 disulfides stabilise this stretch: cysteine 42/cysteine 72, cysteine 70/cysteine 79, cysteine 87/cysteine 98, cysteine 92/cysteine 109, cysteine 111/cysteine 120, cysteine 128/cysteine 209, cysteine 149/cysteine 191, cysteine 180/cysteine 204, cysteine 214/cysteine 345, cysteine 257/cysteine 273, cysteine 265/cysteine 334, cysteine 359/cysteine 434, cysteine 391/cysteine 407, and cysteine 424/cysteine 452. The EGF-like domain occupies 83–121 (PVNSCSEPRCFNGGTCWQAVYFSDFVCQCPAGYTGKRCE). Positions 128 to 209 (CYEGQGVTYR…TSESCSVPVC (82 aa)) constitute a Kringle domain. Residue asparagine 153 is glycosylated (N-linked (GlcNAc...) asparagine). In terms of domain architecture, Peptidase S1 spans 226-476 (STGGLFTDIT…YLGWIRDNMH (251 aa)). Catalysis depends on charge relay system residues histidine 272 and aspartate 321. N-linked (GlcNAc...) asparagine glycosylation is present at asparagine 398. Serine 428 serves as the catalytic Charge relay system.

This sequence belongs to the peptidase S1 family. As to quaternary structure, monomer.

The protein localises to the secreted. It carries out the reaction Specific cleavage of Arg-|-Val bond in plasminogen to form plasmin.. Its activity is regulated as follows. Activity toward plasminogen is stimulated in the presence of fibrin I. Its function is as follows. Probably essential to support the feeding habits of this exclusively haematophagous animal. Potent thrombolytic agent. The chain is Salivary plasminogen activator alpha 1 from Desmodus rotundus (Vampire bat).